We begin with the raw amino-acid sequence, 274 residues long: NH(3)-dependent NAD(+) synthetase (274 aa).

46-53 (GISGGQDS) is a binding site for ATP. Residue Asp-52 participates in Mg(2+) binding. Position 140 (Arg-140) interacts with deamido-NAD(+). ATP is bound at residue Thr-160. Residue Glu-165 participates in Mg(2+) binding. Deamido-NAD(+)-binding residues include Lys-173 and Asp-180. 2 residues coordinate ATP: Lys-189 and Thr-211. Residue 260 to 261 (HK) participates in deamido-NAD(+) binding.

It belongs to the NAD synthetase family. Homodimer.

The enzyme catalyses deamido-NAD(+) + NH4(+) + ATP = AMP + diphosphate + NAD(+) + H(+). It participates in cofactor biosynthesis; NAD(+) biosynthesis; NAD(+) from deamido-NAD(+) (ammonia route): step 1/1. Its function is as follows. Catalyzes the ATP-dependent amidation of deamido-NAD to form NAD. Uses ammonia as a nitrogen source. The sequence is that of NH(3)-dependent NAD(+) synthetase from Streptococcus equi subsp. equi (strain 4047).